We begin with the raw amino-acid sequence, 380 residues long: 4-hydroxy-3-methylbut-2-en-1-yl diphosphate synthase (flavodoxin) (380 aa).

[4Fe-4S] cluster-binding residues include Cys273, Cys276, Cys308, and Glu315.

This sequence belongs to the IspG family. The cofactor is [4Fe-4S] cluster.

It catalyses the reaction (2E)-4-hydroxy-3-methylbut-2-enyl diphosphate + oxidized [flavodoxin] + H2O + 2 H(+) = 2-C-methyl-D-erythritol 2,4-cyclic diphosphate + reduced [flavodoxin]. Its pathway is isoprenoid biosynthesis; isopentenyl diphosphate biosynthesis via DXP pathway; isopentenyl diphosphate from 1-deoxy-D-xylulose 5-phosphate: step 5/6. Converts 2C-methyl-D-erythritol 2,4-cyclodiphosphate (ME-2,4cPP) into 1-hydroxy-2-methyl-2-(E)-butenyl 4-diphosphate. The polypeptide is 4-hydroxy-3-methylbut-2-en-1-yl diphosphate synthase (flavodoxin) (Leifsonia xyli subsp. xyli (strain CTCB07)).